A 261-amino-acid chain; its full sequence is Succinate dehydrogenase iron-sulfur subunit (261 aa).

One can recognise a 2Fe-2S ferredoxin-type domain in the interval 28–119 (RKVQVYRYDP…DIKIYPLPHM (92 aa)). The [2Fe-2S] cluster site is built by cysteine 80, cysteine 85, and cysteine 100. The 31-residue stretch at 161–191 (DREKLDGLYECILCACCSTSCPSYWWNSDKY) folds into the 4Fe-4S ferredoxin-type domain. Cysteine 171, cysteine 174, and cysteine 177 together coordinate [4Fe-4S] cluster. Position 181 (cysteine 181) interacts with [3Fe-4S] cluster. Tryptophan 186 is an a ubiquinone binding site. [3Fe-4S] cluster-binding residues include cysteine 228 and cysteine 234. Residue cysteine 238 coordinates [4Fe-4S] cluster.

This sequence belongs to the succinate dehydrogenase/fumarate reductase iron-sulfur protein family. Part of an enzyme complex containing four subunits: a flavoprotein, an iron-sulfur, cytochrome b-556, and a hydrophobic anchor protein. Requires [2Fe-2S] cluster as cofactor. [3Fe-4S] cluster is required as a cofactor. [4Fe-4S] cluster serves as cofactor.

It carries out the reaction a quinone + succinate = fumarate + a quinol. It participates in carbohydrate metabolism; tricarboxylic acid cycle; fumarate from succinate (bacterial route): step 1/1. The sequence is that of Succinate dehydrogenase iron-sulfur subunit (sdhB) from Rickettsia typhi (strain ATCC VR-144 / Wilmington).